A 310-amino-acid chain; its full sequence is Urease accessory protein UreD (310 aa).

Belongs to the UreD family. As to quaternary structure, ureD, UreF and UreG form a complex that acts as a GTP-hydrolysis-dependent molecular chaperone, activating the urease apoprotein by helping to assemble the nickel containing metallocenter of UreC. The UreE protein probably delivers the nickel.

The protein resides in the cytoplasm. Functionally, required for maturation of urease via the functional incorporation of the urease nickel metallocenter. The polypeptide is Urease accessory protein UreD (Synechococcus sp. (strain RCC307)).